We begin with the raw amino-acid sequence, 340 residues long: MAQITTTDANEFSSSAEFIPMRGFSNCHLQTMLPRLFRRQVKFTPYWQRLELPDGDFVDLAWSENPAQAQHKPRLVVFHGLEGSLNSPYAHGLVEAAQKRGWLGVVMHFRGCSGEPNRMHRIYHSGETEDASWFLRWLQREFGHAPTAAVGYSLGGNMLACLLAKEGNDLPVDAAVIVSAPFMLEACSYHMEKGFSRVYQRYLLNLLKANAARKLAAYPGTLPINLAQLKSVRRIREFDDLITARIHGYADAIDYYRQCSAMPMLNRIAKPTLIIHAKDDPFMDHQVIPKPESLPPQVEYQLTEHGGHVGFIGGTLLHPQMWLESRIPDWLTTYLEAKSC.

The 240-residue stretch at 73 to 312 (PRLVVFHGLE…TEHGGHVGFI (240 aa)) folds into the AB hydrolase-1 domain. Active-site charge relay system residues include Ser153, Asp280, and His308.

It belongs to the AB hydrolase superfamily. AB hydrolase 4 family.

The chain is Putative esterase YheT (yheT) from Escherichia coli (strain K12).